The following is a 512-amino-acid chain: MAEPSVESSSPGGSATSDDHEFDPSADMLVHDFDDERTLEEEEMMEGETNFSSEIEDLAREGDMPIHELLSLYGYGSTVRLPEEDEEEEEEEEEGEDDEDADNDDNSGCSGENKEENIKDSSGQEDETQSSNDDPSQSVASQDAQEIIRPRRCKYFDTNSEVEEESEEDEDYIPSEDWKKEIMVGSMFQAEIPVGICRYKENEKVYENDDQLLWDPEYLPEDKVIIFLKDASRRTGDEKGVEAIPEGSHIKDNEQALYELVKCNFDTEEALRRLRFNVKAAREELSVWTEEECRNFEQGLKAYGKDFHLIQANKVRTRSVGECVAFYYMWKKSERYDFFAQQTRFGKKKYNLHPGVTDYMDRLLDESESAASSRAPSPPPTASNSSNSQSEKEDGTVSTTNQNGVSSNGPGEILNKEEVKVEGLHINGPTGGNKKPLHADMDTNGYETDNLTTDPKLAHMTARNENDFDEKSERPAKRRRVNSNGKESPGSSEFFQEAVSHGKFEELENTDD.

Residues 1 to 16 are compositionally biased toward low complexity; it reads MAEPSVESSSPGGSAT. Disordered regions lie at residues 1–63 and 75–173; these read MAEP…REGD and YGST…EDYI. Residue S10 is modified to Phosphoserine. Residues 17 to 36 show a composition bias toward basic and acidic residues; the sequence is SDDHEFDPSADMLVHDFDDE. 2 stretches are compositionally biased toward acidic residues: residues 37 to 46 and 83 to 105; these read RTLEEEEMME and EEDE…DNDD. Polar residues predominate over residues 129 to 144; that stretch reads QSSNDDPSQSVASQDA. The residue at position 141 (S141) is a Phosphoserine. A Phosphotyrosine modification is found at Y155. 2 positions are modified to phosphoserine: S160 and S166. Over residues 160-173 the composition is skewed to acidic residues; the sequence is SEVEEESEEDEDYI. One can recognise an ELM2 domain in the interval 180–278; that stretch reads KEIMVGSMFQ…EALRRLRFNV (99 aa). The interval 180 to 284 is interaction with HDAC1; that stretch reads KEIMVGSMFQ…RFNVKAAREE (105 aa). K239 participates in a covalent cross-link: Glycyl lysine isopeptide (Lys-Gly) (interchain with G-Cter in SUMO2). The SANT domain maps to 283–335; that stretch reads EELSVWTEEECRNFEQGLKAYGKDFHLIQANKVRTRSVGECVAFYYMWKKSER. Residues 366–512 are disordered; it reads ESESAASSRA…KFEELENTDD (147 aa). 3 positions are modified to phosphoserine: S367, S369, and S377. Over residues 396–409 the composition is skewed to polar residues; the sequence is TVSTTNQNGVSSNG. Residues 414-423 are compositionally biased toward basic and acidic residues; the sequence is LNKEEVKVEG. K420 participates in a covalent cross-link: Glycyl lysine isopeptide (Lys-Gly) (interchain with G-Cter in SUMO2). The residue at position 448 (T448) is a Phosphothreonine. Basic and acidic residues predominate over residues 462–475; that stretch reads ARNENDFDEKSERP. The span at 482–494 shows a compositional bias: polar residues; the sequence is NSNGKESPGSSEF. Phosphoserine is present on residues S483, S488, and S491.

As to quaternary structure, interacts with HDAC1. Part of a complex containing at least CDYL, MIER1, MIER2, HDAC1 and HDAC2.

The protein localises to the nucleus. Transcriptional repressor regulating the expression of a number of genes including SP1 target genes. Probably functions through recruitment of HDAC1 a histone deacetylase involved in chromatin silencing. The sequence is that of Mesoderm induction early response protein 1 (MIER1) from Pongo abelii (Sumatran orangutan).